Consider the following 494-residue polypeptide: Sugar phosphate exchanger 3 (494 aa).

A helical membrane pass occupies residues 10 to 30; sequence GALLTSFSHHHLAVFLLTFFS. An N-linked (GlcNAc...) asparagine glycan is attached at Asn58. 5 helical membrane passes run 81 to 101, 113 to 133, 146 to 166, 177 to 197, and 209 to 229; these read TLFL…GLFI, WVLS…GTLT, GLWI…VAVM, VVFG…AFLA, and FLVT…GLLV. Residues 240–261 form a disordered region; the sequence is GAEESSEEDSQRPLIDGAENED. 6 helical membrane-spanning segments follow: residues 297-317, 333-353, 357-377, 386-406, 428-448, and 457-477; these read LAYA…PFYL, IWYD…SDVL, APVL…YSRS, LLMT…SSAI, GIVD…VSLI, and VFYF…PLIV.

This sequence belongs to the major facilitator superfamily. Organophosphate:Pi antiporter (OPA) (TC 2.A.1.4) family. In terms of assembly, interacts with ATRAID; the interaction is direct and both proteins are mutually dependent for their stability. Post-translationally, glycosylated.

The protein localises to the endoplasmic reticulum membrane. It localises to the lysosome membrane. Functionally, unlike the other SLC37 members, lacks glucose-6-phosphate antiporter activity. In osteoclasts, forms a transporter complex with ATRAID for nitrogen-containing-bisphophonates (N-BPs) required for releasing N-BP molecules that have trafficked to lysosomes through fluid-phase endocytosis into the cytosol. The polypeptide is Sugar phosphate exchanger 3 (Slc37a3) (Mus musculus (Mouse)).